A 285-amino-acid chain; its full sequence is NADPH-dependent 7-cyano-7-deazaguanine reductase (285 aa).

A substrate-binding site is contributed by 91–93; it reads IES. 93 to 94 contributes to the NADPH binding site; sequence SK. Catalysis depends on Cys191, which acts as the Thioimide intermediate. Asp198 serves as the catalytic Proton donor. 230-231 is a substrate binding site; that stretch reads HE. 259–260 is a binding site for NADPH; that stretch reads RG.

The protein belongs to the GTP cyclohydrolase I family. QueF type 2 subfamily. Homodimer.

It is found in the cytoplasm. It carries out the reaction 7-aminomethyl-7-carbaguanine + 2 NADP(+) = 7-cyano-7-deazaguanine + 2 NADPH + 3 H(+). The protein operates within tRNA modification; tRNA-queuosine biosynthesis. In terms of biological role, catalyzes the NADPH-dependent reduction of 7-cyano-7-deazaguanine (preQ0) to 7-aminomethyl-7-deazaguanine (preQ1). The polypeptide is NADPH-dependent 7-cyano-7-deazaguanine reductase (Legionella pneumophila (strain Corby)).